Reading from the N-terminus, the 144-residue chain is MAAQKKQGERVLPARSTRKRRQLPDMLYYDERTDSYVTPQERSLSEANAQTRPAPNTINQAVDAKQSAREARVQELMKSKLYHLRKQQKQARHKRDQWAIDYLEWKKNEDEDVWNSDAEATGPAEHTSSFLDALRFSQQFMKAE.

A disordered region spans residues 1 to 58; that stretch reads MAAQKKQGERVLPARSTRKRRQLPDMLYYDERTDSYVTPQERSLSEANAQTRPAPNTI. The segment covering 35–58 has biased composition (polar residues); the sequence is SYVTPQERSLSEANAQTRPAPNTI.

In terms of assembly, component of the INO80 chromatin remodeling complex.

It localises to the nucleus. Component of the INO80 complex which remodels chromatin by shifting nucleosomes and is involved in DNA repair. The sequence is that of INO80 complex subunit 5 (iec5) from Schizosaccharomyces pombe (strain 972 / ATCC 24843) (Fission yeast).